The sequence spans 137 residues: Large ribosomal subunit protein uL16 (137 aa).

This sequence belongs to the universal ribosomal protein uL16 family. As to quaternary structure, part of the 50S ribosomal subunit.

In terms of biological role, binds 23S rRNA and is also seen to make contacts with the A and possibly P site tRNAs. The protein is Large ribosomal subunit protein uL16 of Francisella tularensis subsp. holarctica (strain FTNF002-00 / FTA).